The following is a 318-amino-acid chain: tRNA U34 carboxymethyltransferase (318 aa).

7 residues coordinate carboxy-S-adenosyl-L-methionine: K88, W102, K107, G126, M192, Y196, and R311.

It belongs to the class I-like SAM-binding methyltransferase superfamily. CmoB family. As to quaternary structure, homotetramer.

The catalysed reaction is carboxy-S-adenosyl-L-methionine + 5-hydroxyuridine(34) in tRNA = 5-carboxymethoxyuridine(34) in tRNA + S-adenosyl-L-homocysteine + H(+). Its function is as follows. Catalyzes carboxymethyl transfer from carboxy-S-adenosyl-L-methionine (Cx-SAM) to 5-hydroxyuridine (ho5U) to form 5-carboxymethoxyuridine (cmo5U) at position 34 in tRNAs. The sequence is that of tRNA U34 carboxymethyltransferase from Pseudomonas fluorescens (strain SBW25).